A 294-amino-acid polypeptide reads, in one-letter code: 4-hydroxy-tetrahydrodipicolinate synthase (294 aa).

A pyruvate-binding site is contributed by Thr-44. Catalysis depends on Tyr-132, which acts as the Proton donor/acceptor. The active-site Schiff-base intermediate with substrate is Lys-160. A pyruvate-binding site is contributed by Val-202.

It belongs to the DapA family. Homotetramer; dimer of dimers.

The protein resides in the cytoplasm. The catalysed reaction is L-aspartate 4-semialdehyde + pyruvate = (2S,4S)-4-hydroxy-2,3,4,5-tetrahydrodipicolinate + H2O + H(+). The protein operates within amino-acid biosynthesis; L-lysine biosynthesis via DAP pathway; (S)-tetrahydrodipicolinate from L-aspartate: step 3/4. In terms of biological role, catalyzes the condensation of (S)-aspartate-beta-semialdehyde [(S)-ASA] and pyruvate to 4-hydroxy-tetrahydrodipicolinate (HTPA). In Leptospira borgpetersenii serovar Hardjo-bovis (strain JB197), this protein is 4-hydroxy-tetrahydrodipicolinate synthase.